Here is a 144-residue protein sequence, read N- to C-terminus: uncharacterized protein (144 aa).

A coiled-coil region spans residues 23–82 (EELYKKLENNLRKIETSYLDSKHCQDFKRKIEYYKIVPLISETKEIIKVLIQKIETLEIK).

This is an uncharacterized protein from Acanthamoeba polyphaga mimivirus (APMV).